Here is a 240-residue protein sequence, read N- to C-terminus: MAQVSMRDMLQAGVHFGHQTRYWNPKMKPFIYGPRNGVHIINLEKTVPMFNEALVELTRIAGNNGKILFVGTKRAATEAVKAAALDCQQYYVNHRWLGGMLTNWKTVRQSIRRLKDLETQSQDGTFDKLTKKEALMRTREMEKLELSLGGIKEMGGLPDALFVIGADHEHIAVKEANNLGIPVFAIVDTNSDPDGVDFVIPGNDDAARAIQLYLSAAAAAVKEGRHQDAVTEENFVAEAE.

It belongs to the universal ribosomal protein uS2 family.

In Pasteurella multocida (strain Pm70), this protein is Small ribosomal subunit protein uS2 (rpsB).